The primary structure comprises 178 residues: Ribosome maturation factor RimM (178 aa).

A PRC barrel domain is found at 98-178 (DGEYYWNQLE…RILVDWDPEF (81 aa)).

Belongs to the RimM family. Binds ribosomal protein uS19.

It is found in the cytoplasm. An accessory protein needed during the final step in the assembly of 30S ribosomal subunit, possibly for assembly of the head region. Essential for efficient processing of 16S rRNA. May be needed both before and after RbfA during the maturation of 16S rRNA. It has affinity for free ribosomal 30S subunits but not for 70S ribosomes. This is Ribosome maturation factor RimM from Cellvibrio japonicus (strain Ueda107) (Pseudomonas fluorescens subsp. cellulosa).